Here is a 243-residue protein sequence, read N- to C-terminus: uncharacterized protein (243 aa).

The first 16 residues, 1-16 (MKLLALVALCAVGVAS), serve as a signal peptide directing secretion. An N-linked (GlcNAc...) asparagine glycan is attached at N55. Disordered stretches follow at residues 95–126 (SQGR…EKPS) and 208–235 (NQQQ…KPTV). Composition is skewed to low complexity over residues 99–112 (NQQQ…SQGG) and 209–229 (QQQQ…STTL). Cysteines 141 and 239 form a disulfide.

It belongs to the protease inhibitor I33 family.

The protein localises to the secreted. This is an uncharacterized protein from Caenorhabditis elegans.